The sequence spans 269 residues: uncharacterized protein (269 aa).

A run of 8 helical transmembrane segments spans residues 9–29, 50–70, 82–102, 107–127, 147–167, 173–193, 200–220, and 224–244; these read YIIG…AHLF, FMLG…IVPL, FSII…VWAF, LYWT…MYGQ, LVFG…LHCT, VFSN…ILGF, LVSA…HLFA, and IFAF…FLLP.

It localises to the membrane. This is an uncharacterized protein from Schizosaccharomyces pombe (strain 972 / ATCC 24843) (Fission yeast).